We begin with the raw amino-acid sequence, 428 residues long: Cysteine synthase 2 (428 aa).

A helical transmembrane segment spans residues 7–27 (IYIGSAFVAGVVLTIAFKDLF). The residue at position 106 (K106) is an N6-(pyridoxal phosphate)lysine. Pyridoxal 5'-phosphate is bound by residues 260–264 (GTGGT) and S367.

It belongs to the cysteine synthase/cystathionine beta-synthase family. It depends on pyridoxal 5'-phosphate as a cofactor.

It is found in the mitochondrion outer membrane. It carries out the reaction O-acetyl-L-serine + hydrogen sulfide = L-cysteine + acetate. Putative cysteine synthase that catalyzes the conversion of O-acetyl-L-serine (OAS) into cysteine, the last step in the cysteine biosynthesis pathway. However, in contrast to cysteine synthase cysB, this CS-like protein seems not to function in cysteine biosynthesis. The protein is Cysteine synthase 2 of Emericella nidulans (strain FGSC A4 / ATCC 38163 / CBS 112.46 / NRRL 194 / M139) (Aspergillus nidulans).